The sequence spans 101 residues: Small ribosomal subunit protein uS14 (101 aa).

The disordered stretch occupies residues 1–24; the sequence is MAKVSSIKKNEKRKKLSQSLHNKR. Residues 10-24 are compositionally biased toward basic residues; it reads NEKRKKLSQSLHNKR.

This sequence belongs to the universal ribosomal protein uS14 family. As to quaternary structure, part of the 30S ribosomal subunit. Contacts proteins S3 and S10.

In terms of biological role, binds 16S rRNA, required for the assembly of 30S particles and may also be responsible for determining the conformation of the 16S rRNA at the A site. The polypeptide is Small ribosomal subunit protein uS14 (Rickettsia bellii (strain OSU 85-389)).